We begin with the raw amino-acid sequence, 167 residues long: Lipoprotein signal peptidase (167 aa).

The next 3 membrane-spanning stretches (helical) occupy residues 8-28 (FFLL…YWIM), 61-81 (FSHW…LWLW), and 93-113 (FGLT…ICFY). Active-site residues include Asp117 and Asp136. The chain crosses the membrane as a helical span at residues 126–146 (IFYFAVFNLADTFITLGVIAI).

It belongs to the peptidase A8 family.

Its subcellular location is the cell inner membrane. The enzyme catalyses Release of signal peptides from bacterial membrane prolipoproteins. Hydrolyzes -Xaa-Yaa-Zaa-|-(S,diacylglyceryl)Cys-, in which Xaa is hydrophobic (preferably Leu), and Yaa (Ala or Ser) and Zaa (Gly or Ala) have small, neutral side chains.. The protein operates within protein modification; lipoprotein biosynthesis (signal peptide cleavage). Functionally, this protein specifically catalyzes the removal of signal peptides from prolipoproteins. The polypeptide is Lipoprotein signal peptidase (Bartonella quintana (strain Toulouse) (Rochalimaea quintana)).